The chain runs to 238 residues: Uridylate kinase (238 aa).

Residue 11-14 (KLSG) coordinates ATP. Glycine 52 provides a ligand contact to UMP. The ATP site is built by glycine 53 and arginine 57. UMP is bound by residues aspartate 72 and 134-141 (TGFSYFTT). Positions 162, 168, and 171 each coordinate ATP.

This sequence belongs to the UMP kinase family. In terms of assembly, homohexamer.

It localises to the cytoplasm. The catalysed reaction is UMP + ATP = UDP + ADP. It participates in pyrimidine metabolism; CTP biosynthesis via de novo pathway; UDP from UMP (UMPK route): step 1/1. With respect to regulation, inhibited by UTP. Functionally, catalyzes the reversible phosphorylation of UMP to UDP. The sequence is that of Uridylate kinase from Mesoplasma florum (strain ATCC 33453 / NBRC 100688 / NCTC 11704 / L1) (Acholeplasma florum).